Consider the following 228-residue polypeptide: Probable septum site-determining protein MinC (228 aa).

It belongs to the MinC family. In terms of assembly, interacts with MinD and FtsZ.

Cell division inhibitor that blocks the formation of polar Z ring septums. Rapidly oscillates between the poles of the cell to destabilize FtsZ filaments that have formed before they mature into polar Z rings. Prevents FtsZ polymerization. The protein is Probable septum site-determining protein MinC of Pectobacterium carotovorum subsp. carotovorum (strain PC1).